The following is a 184-amino-acid chain: Ribosome-recycling factor (184 aa).

It belongs to the RRF family.

It is found in the cytoplasm. Responsible for the release of ribosomes from messenger RNA at the termination of protein biosynthesis. May increase the efficiency of translation by recycling ribosomes from one round of translation to another. The chain is Ribosome-recycling factor from Acinetobacter baumannii (strain SDF).